The sequence spans 420 residues: Probable secreted beta-glucosidase SUN4 (420 aa).

Residues 1 to 24 (MKLSATTLTAASLIGYSTIVSALP) form the signal peptide. The tract at residues 89 to 145 (TKSSSKVASSSESTEQIATTSSSAQTTLTSSETSTSESSVPISTSGSASTSSAASSA) is disordered. N-linked (GlcNAc...) asparagine glycosylation is present at Asn395.

This sequence belongs to the SUN family. Glycosylated.

The protein resides in the secreted. The protein localises to the cell wall. Involved in the remodeling of the cell wall during the various phases of yeast culture development and under various environmental conditions and plays a role in septation. The sequence is that of Probable secreted beta-glucosidase SUN4 (SUN4) from Saccharomyces cerevisiae (strain ATCC 204508 / S288c) (Baker's yeast).